A 1411-amino-acid chain; its full sequence is MKSLKSRLWKQDAPGPTSPSSPTAVASTQSAEWNKYDDRLMKAAERGDVEKVSSILAKKGVHPGKLDVEGRSAFHVVASKGNLECLNAILTHGIDVATRDSAGRNALHLAAKYGHALCLQKLLQYNCPTEHVDLQGRTALHDAVMADCPSSIQLLCDHGASVNAKDIDGRTPLVLATQMCRPTICQLLIDRGADVNSRDKQNRTALMLGCEYGCRDAVEVLVKNGADLTLLDALGHDSSYYARIGDNLDILNLLKTASENTNKGRELWRKGPPLQQRNLSHTQDEGSVKSTQREQREPHSFQDLEIENEDLREKLRKIQQEQRILLDKVNGLQLQLNEEVMVADDLESEREKPKSLLAAKEKQHEESLRTIEALKNRFKYFESDHPGPGSYPSNRKEDMLHKQGQMYTTEPQCASPGIPPHMHSRSMLRPLELSLPSQTSYSENEILKKELETLRTYYDSAKQDRLKFQNELAHKVAECKALALECERVKEDSDEQIKQLEDALKDVQKRMYESEGKVKQMQTHFLALKEHLTNEAATGSHRIIEELREQLKDLKGKYEGASAEVGKLRSQIKQSEMLVGEFKRDEGRLVEENKRLQKECGTCEVELERRGRRVVELEGQLKELGAKLALSVPTEKFESMKSSLSNDINEKVKRLAEVGRDYESAQGEIRQLKRDLESVRAQHIRPEEHEQLRSRLEQKSGELGKKVSELTLKNQTLQKDVEKLHADNKLLNQQVHSLTVEMKTRYVPLRVSEEMKRSHDVNVEDLNKKLSEATQRYAEKKQEAERLLAENDKLTKNVSRLEAVFVAPEKHEKELMGLKSNIAELKKQLSELNKKCGEGQEKIRALMSENSSLKKTLSSQYVPAKTHEEVKASLNSTVEKTNRALLEAKKRFDDTSQEVSKLRDENEVLRRNLENVQNQMKADYVSLEEHSRRMSTVSQSLKEAQEANAAILADHRQGQEEIVSLHAEIKAQKKELDTIQECIKLKYAPLARLEECERKFKATEKGLKEQLSEQTHKCRQRDEEVKKGKQENERLRADLAALQKELQDRNALAEEAREAERALSGKADELSKQLKDLSQKYSDVKSEREKLVEEKAKQASEILAAQNLLQKQPVPLEQVEALKKSLNGTIEQLKEELRSKQRCLEREQQTVSQLQQLLENQKNSSVTLAEHLKLKEALEKEVGIMKASLREKEEESQKKTKEVSKLQTEVQTTKQALKNLETREVVDMSKYKATKNDLETQISNLNDKLASLNRKYDQACEEKVSAKDEKELLHLSIEQEIRDQKERCDKSLTTIMELQQRIQESAKQIEAKDNKITELLNDVERLKQALNGLSQLTYSSGSPTKRQSQLVDTLQQRVRDLQQQLADADRQHQEVIAIYRTHLLSAAQGHMDEDVQAALLQIIQMRQGLVC.

Met-1 is modified (N-acetylmethionine). The disordered stretch occupies residues 1–30 (MKSLKSRLWKQDAPGPTSPSSPTAVASTQS). A compositionally biased stretch (low complexity) spans 13–30 (APGPTSPSSPTAVASTQS). ANK repeat units follow at residues 69 to 98 (EGRSAFHVVASKGNLECLNAILTHGIDVAT), 102 to 131 (AGRNALHLAAKYGHALCLQKLLQYNCPTEH), 135 to 164 (QGRTALHDAVMADCPSSIQLLCDHGASVNA), 168 to 197 (DGRTPLVLATQMCRPTICQLLIDRGADVNS), 201 to 230 (QNRTALMLGCEYGCRDAVEVLVKNGADLTL), and 234 to 263 (LGHDSSYYARIGDNLDILNLLKTASENTNK). A disordered region spans residues 263–301 (KGRELWRKGPPLQQRNLSHTQDEGSVKSTQREQREPHSF). A Phosphoserine modification is found at Ser-280. Basic and acidic residues predominate over residues 282–301 (TQDEGSVKSTQREQREPHSF). Coiled coils occupy residues 299–379 (HSFQ…NRFK), 442–624 (SENE…LKEL), and 652–1380 (VKRL…AIYR). Positions 1006–1031 (GLKEQLSEQTHKCRQRDEEVKKGKQE) are disordered.

Component of the apoptosome complex, composed of APAF1, pro-caspase-9 and UACA. In the complex, it probably interacts directly with APAF1. Interacts with LGALS3, ARF6 and ACTB. Interacts with RAB39A. As to expression, highly expressed in heart, liver, kidney and testis. Weakly expressed in lung and skeletal muscle. Not expressed in brain and spleen.

Its subcellular location is the nucleus. The protein resides in the cytoplasm. The protein localises to the cytoskeleton. Regulates APAF1 expression and plays an important role in the regulation of stress-induced apoptosis. Promotes apoptosis by regulating three pathways, apoptosome up-regulation, LGALS3/galectin-3 down-regulation and NF-kappa-B inactivation. Regulates the redistribution of APAF1 into the nucleus after proapoptotic stress. Down-regulates the expression of LGALS3 by inhibiting NFKB1. Functionally, modulates isoactin dynamics to regulate the morphological alterations required for cell growth and motility. Interaction with ARF6 may modulate cell shape and motility after injury. May be involved in multiple neurite formation. This Mus musculus (Mouse) protein is Uveal autoantigen with coiled-coil domains and ankyrin repeats (Uaca).